An 847-amino-acid polypeptide reads, in one-letter code: DNA mismatch repair protein MutS (847 aa).

ATP is bound at residue 603-610 (GPNMSGKS).

It belongs to the DNA mismatch repair MutS family.

Functionally, this protein is involved in the repair of mismatches in DNA. It is possible that it carries out the mismatch recognition step. This protein has a weak ATPase activity. This chain is DNA mismatch repair protein MutS, found in Streptococcus suis (strain 98HAH33).